Consider the following 291-residue polypeptide: ATP synthase gamma chain (291 aa).

This sequence belongs to the ATPase gamma chain family. As to quaternary structure, F-type ATPases have 2 components, CF(1) - the catalytic core - and CF(0) - the membrane proton channel. CF(1) has five subunits: alpha(3), beta(3), gamma(1), delta(1), epsilon(1). CF(0) has three main subunits: a, b and c.

It localises to the cell inner membrane. Functionally, produces ATP from ADP in the presence of a proton gradient across the membrane. The gamma chain is believed to be important in regulating ATPase activity and the flow of protons through the CF(0) complex. This Rhodopseudomonas palustris (strain ATCC BAA-98 / CGA009) protein is ATP synthase gamma chain.